We begin with the raw amino-acid sequence, 280 residues long: Protein FAM131C (280 aa).

Residues 195–280 form a disordered region; sequence QDSLPSGPSQ…LWEEDEVFYN (86 aa). A compositionally biased stretch (polar residues) spans 197–211; it reads SLPSGPSQDDSLQAF. The segment covering 215 to 227 has biased composition (pro residues); the sequence is SPSPDSCPSPEEP.

It belongs to the FAM131 family.

The polypeptide is Protein FAM131C (FAM131C) (Homo sapiens (Human)).